The sequence spans 1054 residues: FERM, ARHGEF and pleckstrin domain-containing protein 2 (1054 aa).

In terms of domain architecture, FERM spans 44 to 324 (LHLRVKLLDN…EYHTFFRLLD (281 aa)). Phosphoserine occurs at positions 389 and 439. A disordered region spans residues 421–527 (EFKDSSSSLT…GAGMDCEEPR (107 aa)). Low complexity predominate over residues 468–492 (PGPGLSTKSPQPSPSSRKSPLSLSP). Residues 535–726 (EAYFIVKEIL…TEVTTTLQHI (192 aa)) enclose the DH domain. In terms of domain architecture, PH 1 spans 755 to 852 (EFIREGCLHK…WMLDLNSAIQ (98 aa)). Residues 856 to 894 (SGGDTAPALPGRTVCTRPPRSPNEVSLEQESEDDARGVR) are disordered. Residues 929-1026 (ENQLSGYLLR…WMEVIQGASS (98 aa)) enclose the PH 2 domain. Positions 1029 to 1054 (GRAPSIVQDGPQPSSGLEGMVRGKEE) are disordered.

In terms of assembly, interacts with PLXNA1. Interaction with PLXNA1 or PIP5K1C lowers its guanine nucleotide exchange activity. Dissociates from PLXNA1 when SEMA3A binds to the receptor. Interacts with PIP5K1C via its FERM domain. The interaction with PIP5K1C is enhanced by SEMA3A binding. Interacts with RAC1.

Functions as a guanine nucleotide exchange factor that activates RAC1. May have relatively low activity. Plays a role in the response to class 3 semaphorins and remodeling of the actin cytoskeleton. Plays a role in TNFSF11-mediated osteoclast differentiation, especially in podosome rearrangement and reorganization of the actin cytoskeleton. Regulates the activation of ITGB3, integrin signaling and cell adhesion. This Homo sapiens (Human) protein is FERM, ARHGEF and pleckstrin domain-containing protein 2 (FARP2).